Reading from the N-terminus, the 126-residue chain is Non-specific lipid-transfer protein 13 (126 aa).

The signal sequence occupies residues 1 to 20 (MDTHTTKLVAISLLLLLVIS). 4 disulfides stabilise this stretch: Cys-36–Cys-85, Cys-46–Cys-61, Cys-62–Cys-109, and Cys-83–Cys-123.

Belongs to the plant LTP family.

Functionally, plant non-specific lipid-transfer proteins transfer phospholipids as well as galactolipids across membranes. May play a role in wax or cutin deposition in the cell walls of expanding epidermal cells and certain secretory tissues. The polypeptide is Non-specific lipid-transfer protein 13 (LTP13) (Arabidopsis thaliana (Mouse-ear cress)).